The primary structure comprises 207 residues: MRPLTARQQEVLDLLKRHLETTGMPPTRAEISRELGFKSANAAEEHLKALSRKGAIEIIPGASRGIRILDNSSNDEFDGLPLVGRVRAGEPILAEQHIEATYRVDADMFKPQADFLLKVYGLSMKNVGILDGDLLAVHSTKDVRNGQIVVARIEDEVTVKRLEKKGSIIYLHAENEEFDPIVVNLEEQKNFEIEGIAVGIIRNNAWM.

The segment at residues 28–48 (RAEISRELGFKSANAAEEHLK) is a DNA-binding region (H-T-H motif). Catalysis depends on for autocatalytic cleavage activity residues S123 and K160.

It belongs to the peptidase S24 family. Homodimer.

The catalysed reaction is Hydrolysis of Ala-|-Gly bond in repressor LexA.. Its function is as follows. Represses a number of genes involved in the response to DNA damage (SOS response), including recA and lexA. In the presence of single-stranded DNA, RecA interacts with LexA causing an autocatalytic cleavage which disrupts the DNA-binding part of LexA, leading to derepression of the SOS regulon and eventually DNA repair. In Haemophilus influenzae (strain ATCC 51907 / DSM 11121 / KW20 / Rd), this protein is LexA repressor.